Here is a 74-residue protein sequence, read N- to C-terminus: ATP synthase subunit c (74 aa).

2 helical membrane passes run L5–G25 and L49–L69.

Belongs to the ATPase C chain family. In terms of assembly, F-type ATPases have 2 components, F(1) - the catalytic core - and F(0) - the membrane proton channel. F(1) has five subunits: alpha(3), beta(3), gamma(1), delta(1), epsilon(1). F(0) has four main subunits: a(1), b(1), b'(1) and c(10-14). The alpha and beta chains form an alternating ring which encloses part of the gamma chain. F(1) is attached to F(0) by a central stalk formed by the gamma and epsilon chains, while a peripheral stalk is formed by the delta, b and b' chains.

The protein resides in the cell inner membrane. F(1)F(0) ATP synthase produces ATP from ADP in the presence of a proton or sodium gradient. F-type ATPases consist of two structural domains, F(1) containing the extramembraneous catalytic core and F(0) containing the membrane proton channel, linked together by a central stalk and a peripheral stalk. During catalysis, ATP synthesis in the catalytic domain of F(1) is coupled via a rotary mechanism of the central stalk subunits to proton translocation. Functionally, key component of the F(0) channel; it plays a direct role in translocation across the membrane. A homomeric c-ring of between 10-14 subunits forms the central stalk rotor element with the F(1) delta and epsilon subunits. In Roseobacter denitrificans (strain ATCC 33942 / OCh 114) (Erythrobacter sp. (strain OCh 114)), this protein is ATP synthase subunit c.